Reading from the N-terminus, the 1025-residue chain is Retinoblastoma-related protein (1025 aa).

The interval 1-20 (MEDHPPKPSIPTADASLSNH) is disordered. Residues 422-623 (TPVTTAMTTA…EKGSSMYNSL (202 aa)) form a domain A region. Positions 422–875 (TPVTTAMTTA…NEIFIPAVKP (454 aa)) are pocket. Residues 624 to 744 (TVARPALSAE…PGAGGETCAE (121 aa)) form a spacer region. The domain B stretch occupies residues 745 to 875 (TAINVFFSKI…NEIFIPAVKP (131 aa)).

It belongs to the retinoblastoma protein (RB) family.

It localises to the nucleus. Regulator of biological processes that recruits a histone deacetylase to control gene transcription. May play a role in the entry into mitosis, negatively regulating the cell proliferation. Formation of stable complexes with geminiviridae replication-associated proteins may create a cellular environment which favors viral DNA replication. The chain is Retinoblastoma-related protein (pRB) from Camellia sinensis (Tea plant).